The chain runs to 690 residues: Elongation factor G (690 aa).

Positions 8–283 (EDYRNFGIMA…AVVDYLPSPL (276 aa)) constitute a tr-type G domain. GTP is bound by residues 17–24 (AHIDAGKT), 81–85 (DTPGH), and 135–138 (NKMD).

The protein belongs to the TRAFAC class translation factor GTPase superfamily. Classic translation factor GTPase family. EF-G/EF-2 subfamily.

The protein resides in the cytoplasm. Catalyzes the GTP-dependent ribosomal translocation step during translation elongation. During this step, the ribosome changes from the pre-translocational (PRE) to the post-translocational (POST) state as the newly formed A-site-bound peptidyl-tRNA and P-site-bound deacylated tRNA move to the P and E sites, respectively. Catalyzes the coordinated movement of the two tRNA molecules, the mRNA and conformational changes in the ribosome. In Bradyrhizobium sp. (strain BTAi1 / ATCC BAA-1182), this protein is Elongation factor G.